The following is a 461-amino-acid chain: GTPase Der (461 aa).

2 EngA-type G domains span residues 2-166 and 199-370; these read IKVA…PKKP and IKVA…KNYS. GTP contacts are provided by residues 8 to 15, 57 to 61, 118 to 121, 205 to 212, 252 to 256, and 316 to 319; these read GKPNVGKS, DTGGL, NKID, GRVNVGKS, DTAGI, and NKWD. The KH-like domain maps to 371 to 455; the sequence is KRIPTATLNK…PIIFVARKKG (85 aa).

Belongs to the TRAFAC class TrmE-Era-EngA-EngB-Septin-like GTPase superfamily. EngA (Der) GTPase family. As to quaternary structure, associates with the 50S ribosomal subunit.

Functionally, GTPase that plays an essential role in the late steps of ribosome biogenesis. This is GTPase Der from Nautilia profundicola (strain ATCC BAA-1463 / DSM 18972 / AmH).